Here is a 1203-residue protein sequence, read N- to C-terminus: Exonuclease/helicase subunit RexA (1203 aa).

Residues 4–472 enclose the UvrD-like helicase ATP-binding domain; sequence VKLTPEQNEA…IRLKENFRSR (469 aa). 25 to 32 contacts ATP; it reads ASAGSGKT. One can recognise a UvrD-like helicase C-terminal domain in the interval 503 to 785; the sequence is VQGNISDYPV…RVMTFHKSKG (283 aa).

This sequence belongs to the helicase family. AddA subfamily. Heterodimer of RexA (AddA) and RexB. It depends on Mg(2+) as a cofactor.

The catalysed reaction is Couples ATP hydrolysis with the unwinding of duplex DNA by translocating in the 3'-5' direction.. The enzyme catalyses ATP + H2O = ADP + phosphate + H(+). Its function is as follows. The heterodimer acts both as an ATP-dependent DNA helicase and an ATP-dependent, dual-direction single-stranded exonuclease. Recognizes the L.lactis chi site (5'-GCGCGTG-3'), which stimulates homologous recombination. The RexA (AddA) nuclease domain is required for chi fragment generation; this subunit has 3'-&gt;5' exonuclease activity and probably also performs the helicase function. The polypeptide is Exonuclease/helicase subunit RexA (Lactococcus lactis subsp. cremoris (strain MG1363)).